Reading from the N-terminus, the 117-residue chain is Large ribosomal subunit protein eL18 (117 aa).

This sequence belongs to the eukaryotic ribosomal protein eL18 family.

The polypeptide is Large ribosomal subunit protein eL18 (Halobacterium salinarum (strain ATCC 29341 / DSM 671 / R1)).